We begin with the raw amino-acid sequence, 154 residues long: 6,7-dimethyl-8-ribityllumazine synthase (154 aa).

Residues Trp-23, 57-59 (AFE), and 81-83 (AVI) each bind 5-amino-6-(D-ribitylamino)uracil. Position 86–87 (86–87 (AT)) interacts with (2S)-2-hydroxy-3-oxobutyl phosphate. The active-site Proton donor is the His-89. Phe-114 provides a ligand contact to 5-amino-6-(D-ribitylamino)uracil. Arg-128 is a (2S)-2-hydroxy-3-oxobutyl phosphate binding site.

This sequence belongs to the DMRL synthase family.

The catalysed reaction is (2S)-2-hydroxy-3-oxobutyl phosphate + 5-amino-6-(D-ribitylamino)uracil = 6,7-dimethyl-8-(1-D-ribityl)lumazine + phosphate + 2 H2O + H(+). It functions in the pathway cofactor biosynthesis; riboflavin biosynthesis; riboflavin from 2-hydroxy-3-oxobutyl phosphate and 5-amino-6-(D-ribitylamino)uracil: step 1/2. Functionally, catalyzes the formation of 6,7-dimethyl-8-ribityllumazine by condensation of 5-amino-6-(D-ribitylamino)uracil with 3,4-dihydroxy-2-butanone 4-phosphate. This is the penultimate step in the biosynthesis of riboflavin. This Sulfurimonas denitrificans (strain ATCC 33889 / DSM 1251) (Thiomicrospira denitrificans (strain ATCC 33889 / DSM 1251)) protein is 6,7-dimethyl-8-ribityllumazine synthase.